Here is an 858-residue protein sequence, read N- to C-terminus: DNA mismatch repair protein MutS (858 aa).

An ATP-binding site is contributed by 613-620; it reads GPNMAGKS.

This sequence belongs to the DNA mismatch repair MutS family.

This protein is involved in the repair of mismatches in DNA. It is possible that it carries out the mismatch recognition step. This protein has a weak ATPase activity. This chain is DNA mismatch repair protein MutS, found in Dehalococcoides mccartyi (strain CBDB1).